Consider the following 617-residue polypeptide: tRNA uridine 5-carboxymethylaminomethyl modification enzyme MnmG (617 aa).

FAD is bound by residues 9-14 (GAGHAG), Val-120, and Thr-175. 267 to 281 (GPRYCPSIEDKVVRF) serves as a coordination point for NAD(+). Residue Gln-364 coordinates FAD.

This sequence belongs to the MnmG family. In terms of assembly, homodimer. Heterotetramer of two MnmE and two MnmG subunits. Requires FAD as cofactor.

The protein resides in the cytoplasm. In terms of biological role, NAD-binding protein involved in the addition of a carboxymethylaminomethyl (cmnm) group at the wobble position (U34) of certain tRNAs, forming tRNA-cmnm(5)s(2)U34. The chain is tRNA uridine 5-carboxymethylaminomethyl modification enzyme MnmG from Onion yellows phytoplasma (strain OY-M).